The sequence spans 642 residues: Sodium- and chloride-dependent neutral and basic amino acid transporter B(0+) (642 aa).

Residues Met1–Asp44 lie on the Cytoplasmic side of the membrane. 3 helical membrane passes run Tyr45–Leu65, Gly72–Leu92, and Ile110–Ile130. Topologically, residues Tyr131 to Val234 are extracellular. N-linked (GlcNAc...) asparagine glycans are attached at residues Asn155, Asn163, Asn174, Asn189, Asn197, Asn202, and Asn230. 2 helical membrane-spanning segments follow: residues Ile235–Phe255 and Ser261–Val281. A glycan (N-linked (GlcNAc...) asparagine) is linked at Asn302. The next 7 membrane-spanning stretches (helical) occupy residues Ala315 to Ser335, Ile348 to Ile368, Leu399 to Leu419, Ile450 to Ile477, Phe480 to Ile500, Cys528 to Phe548, and Val563 to Ile583. Topologically, residues Lys584 to Glu642 are cytoplasmic. Over residues Val622–Ile632 the composition is skewed to basic and acidic residues. The interval Val622–Glu642 is disordered.

Belongs to the sodium:neurotransmitter symporter (SNF) (TC 2.A.22) family. SLC6A14 subfamily. Levels are highest in adult and fetal lung, in trachea and salivary gland. Lower levels detected in mammary gland, stomach and pituitary gland, and very low levels in colon, uterus, prostate and testis.

The protein resides in the membrane. Its subcellular location is the apical cell membrane. The catalysed reaction is glycine(out) + chloride(out) + 2 Na(+)(out) = glycine(in) + chloride(in) + 2 Na(+)(in). The enzyme catalyses L-leucine(out) + chloride(out) + 2 Na(+)(out) = L-leucine(in) + chloride(in) + 2 Na(+)(in). It carries out the reaction L-glutamine(out) + chloride(out) + 2 Na(+)(out) = L-glutamine(in) + chloride(in) + 2 Na(+)(in). It catalyses the reaction L-arginine(out) + chloride(out) + 2 Na(+)(out) = L-arginine(in) + chloride(in) + 2 Na(+)(in). The catalysed reaction is (R)-carnitine(out) + chloride(out) + 2 Na(+)(out) = (R)-carnitine(in) + chloride(in) + 2 Na(+)(in). The enzyme catalyses O-butanoyl-(R)-carnitine(out) + chloride(out) + 2 Na(+)(out) = O-butanoyl-(R)-carnitine(in) + chloride(in) + 2 Na(+)(in). It carries out the reaction O-propanoyl-(R)-carnitine(out) + chloride(out) + 2 Na(+)(out) = O-propanoyl-(R)-carnitine(in) + chloride(in) + 2 Na(+)(in). It catalyses the reaction L-isoleucine(out) + chloride(out) + 2 Na(+)(out) = L-isoleucine(in) + chloride(in) + 2 Na(+)(in). The catalysed reaction is L-methionine(out) + chloride(out) + 2 Na(+)(out) = L-methionine(in) + chloride(in) + 2 Na(+)(in). The enzyme catalyses L-valine(out) + chloride(out) + 2 Na(+)(out) = L-valine(in) + chloride(in) + 2 Na(+)(in). It carries out the reaction L-alanine(out) + chloride(out) + 2 Na(+)(out) = L-alanine(in) + chloride(in) + 2 Na(+)(in). It catalyses the reaction L-serine(out) + chloride(out) + 2 Na(+)(out) = L-serine(in) + chloride(in) + 2 Na(+)(in). The catalysed reaction is L-cysteine(out) + chloride(out) + 2 Na(+)(out) = L-cysteine(in) + chloride(in) + 2 Na(+)(in). The enzyme catalyses L-asparagine(out) + chloride(out) + 2 Na(+)(out) = L-asparagine(in) + chloride(in) + 2 Na(+)(in). It carries out the reaction L-threonine(out) + chloride(out) + 2 Na(+)(out) = L-threonine(in) + chloride(in) + 2 Na(+)(in). It catalyses the reaction L-phenylalanine(out) + chloride(out) + 2 Na(+)(out) = L-phenylalanine(in) + chloride(in) + 2 Na(+)(in). The catalysed reaction is L-tryptophan(out) + chloride(out) + 2 Na(+)(out) = L-tryptophan(in) + chloride(in) + 2 Na(+)(in). The enzyme catalyses L-tyrosine(out) + chloride(out) + 2 Na(+)(out) = L-tyrosine(in) + chloride(in) + 2 Na(+)(in). It carries out the reaction L-histidine(out) + chloride(out) + 2 Na(+)(out) = L-histidine(in) + chloride(in) + 2 Na(+)(in). It catalyses the reaction L-lysine(out) + chloride(out) + 2 Na(+)(out) = L-lysine(in) + chloride(in) + 2 Na(+)(in). The catalysed reaction is beta-alanine(out) + chloride(out) + 2 Na(+)(out) = beta-alanine(in) + chloride(in) + 2 Na(+)(in). Amino acid transporter that plays an important role in the absorption of amino acids in the intestinal tract. Mediates the uptake of a broad range of neutral and cationic amino acids (with the exception of proline) in a Na(+)/Cl(-)-dependent manner. Transports non-alpha-amino acids such as beta-alanine with low affinity, and has a higher affinity for dipolar and cationic amino acids such as leucine and lysine. Can also transport carnitine, butirylcarnitine and propionylcarnitine coupled to the transmembrane gradients of Na(+) and Cl(-). This chain is Sodium- and chloride-dependent neutral and basic amino acid transporter B(0+), found in Homo sapiens (Human).